The chain runs to 122 residues: UPF0102 protein Rleg2_4331 (122 aa).

Belongs to the UPF0102 family.

The polypeptide is UPF0102 protein Rleg2_4331 (Rhizobium leguminosarum bv. trifolii (strain WSM2304)).